Here is a 750-residue protein sequence, read N- to C-terminus: Photosystem I P700 chlorophyll a apoprotein A1 (750 aa).

A run of 8 helical transmembrane segments spans residues 70-93 (VFSA…FHGA), 156-179 (LYCT…FHYH), 195-219 (LNHH…HVSL), 291-309 (IAHH…GHMY), 346-369 (WHAQ…HHMY), 385-411 (LSLF…IFMV), 433-455 (AIIS…LYIH), and 531-549 (FLVH…LILL). Cysteine 573 and cysteine 582 together coordinate [4Fe-4S] cluster. The next 2 membrane-spanning stretches (helical) occupy residues 589-610 (HVFL…HFSW) and 664-686 (LSAY…MFLF). Histidine 675 contributes to the chlorophyll a' binding site. Methionine 683 and tyrosine 691 together coordinate chlorophyll a. Tryptophan 692 is a phylloquinone binding site. A helical membrane pass occupies residues 724-744 (AVGVTHYLLGGIATTWAFFLA).

It belongs to the PsaA/PsaB family. As to quaternary structure, the PsaA/B heterodimer binds the P700 chlorophyll special pair and subsequent electron acceptors. PSI consists of a core antenna complex that captures photons, and an electron transfer chain that converts photonic excitation into a charge separation. The eukaryotic PSI reaction center is composed of at least 11 subunits. P700 is a chlorophyll a/chlorophyll a' dimer, A0 is one or more chlorophyll a, A1 is one or both phylloquinones and FX is a shared 4Fe-4S iron-sulfur center. is required as a cofactor.

Its subcellular location is the plastid. It localises to the chloroplast thylakoid membrane. The catalysed reaction is reduced [plastocyanin] + hnu + oxidized [2Fe-2S]-[ferredoxin] = oxidized [plastocyanin] + reduced [2Fe-2S]-[ferredoxin]. In terms of biological role, psaA and PsaB bind P700, the primary electron donor of photosystem I (PSI), as well as the electron acceptors A0, A1 and FX. PSI is a plastocyanin-ferredoxin oxidoreductase, converting photonic excitation into a charge separation, which transfers an electron from the donor P700 chlorophyll pair to the spectroscopically characterized acceptors A0, A1, FX, FA and FB in turn. Oxidized P700 is reduced on the lumenal side of the thylakoid membrane by plastocyanin. The sequence is that of Photosystem I P700 chlorophyll a apoprotein A1 from Pelargonium hortorum (Common geranium).